The primary structure comprises 261 residues: Transmembrane protein 187 (261 aa).

The next 6 helical transmembrane spans lie at 8-28, 43-63, 88-108, 113-133, 140-162, and 190-210; these read AFVH…TGIF, APVA…VNMA, VFAA…WTQW, VLDQ…CLYL, WLFL…HPQG, and SATY…LKLC.

In terms of tissue distribution, ubiquitous.

The protein localises to the membrane. The polypeptide is Transmembrane protein 187 (TMEM187) (Homo sapiens (Human)).